We begin with the raw amino-acid sequence, 89 residues long: Small ribosomal subunit protein uS15 (89 aa).

The protein belongs to the universal ribosomal protein uS15 family. As to quaternary structure, part of the 30S ribosomal subunit. Forms a bridge to the 50S subunit in the 70S ribosome, contacting the 23S rRNA.

In terms of biological role, one of the primary rRNA binding proteins, it binds directly to 16S rRNA where it helps nucleate assembly of the platform of the 30S subunit by binding and bridging several RNA helices of the 16S rRNA. Forms an intersubunit bridge (bridge B4) with the 23S rRNA of the 50S subunit in the ribosome. This is Small ribosomal subunit protein uS15 from Methylococcus capsulatus (strain ATCC 33009 / NCIMB 11132 / Bath).